Here is a 917-residue protein sequence, read N- to C-terminus: Outer kinetochore KNL1 complex subunit SPC105 (917 aa).

Residues 1 to 17 are compositionally biased toward basic and acidic residues; that stretch reads MNVDERSRIGGREKDAG. The interval 1 to 38 is disordered; the sequence is MNVDERSRIGGREKDAGPGKGILKQNQSSQMTSSFLEN. The span at 24–36 shows a compositional bias: polar residues; sequence KQNQSSQMTSSFL. Ser-77 is subject to Phosphoserine. Disordered stretches follow at residues 93 to 172, 235 to 282, and 324 to 343; these read QNNE…MEMT, TEYE…QPME, and HHID…KRRK. Over residues 106 to 126 the composition is skewed to polar residues; that stretch reads STNSPTKISSQEEPLVTSTQI. A compositionally biased stretch (basic and acidic residues) spans 127-137; the sequence is DDARTEEKTAA. The MELT motif lies at 146 to 149; that stretch reads MELT. Thr-149 bears the Phosphothreonine; by MPS1 mark. The span at 156-170 shows a compositional bias: polar residues; sequence PDSNKASQHDPTSME. The interval 165–183 is interacts with the BUB1-BUB3 complex; sequence DPTSMEMTEVFPRSIRQKN. Short sequence motifs (MELT; degenerate) lie at residues 169 to 172 and 232 to 235; these read MEMT and IDLT. A phosphothreonine; by MPS1 mark is found at Thr-172 and Thr-235. Over residues 245-257 the composition is skewed to polar residues; the sequence is NSVSRSTGKSSDY. Basic and acidic residues-rich tracts occupy residues 258–273 and 324–335; these read SVER…KSEN and HHIDESPSEKHA. Thr-356 is subject to Phosphothreonine. Phosphoserine is present on Ser-380. The disordered stretch occupies residues 397–427; it reads DVFTIEPGTEDTGMQTATDDEEDGENVDDNG. Residues 414–424 are compositionally biased toward acidic residues; the sequence is TDDEEDGENVD. The segment at 507–638 is required for interaction with KRE28; the sequence is PILEVEAFRC…IKEEIRSLKN (132 aa). Residues 591–628 are a coiled coil; sequence ELILAENLNTLKREYEKLNEEVEKVNSIRGKIRKLNEA.

As to quaternary structure, component of the KNL1/SPC105 complex composed of SPC105 and KRE28. Part of the outer kinetochore KMN network that includes the KNL1, MIS12 and NDC80 complexes. Interacts (via phosphorylated MELT motifs) with BUB1 and BUB3 in the BUB1-BUB3 complex; the interaction is direct. Interacts with the MIS12 complex subunits MTW1 (via C-terminus) and NSL1 (via C-terminus). Interacts with the NDC80 complex subunits SPC24 and SPC25. Interacts with CNN1 (via N-terminus).

Its subcellular location is the nucleus. The protein localises to the chromosome. The protein resides in the centromere. It is found in the kinetochore. Acts as a component of the outer kinetochore KNL1 complex that serves as a docking point for spindle assembly checkpoint components and mediates microtubule-kinetochore interactions. Kinetochores, consisting of a centromere-associated inner segment and a microtubule-contacting outer segment, play a crucial role in chromosome segregation by mediating the physical connection between centromeric DNA and spindle microtubules. The outer kinetochore is made up of the ten-subunit KMN network, comprising the MIS12, NDC80 and KNL1 complexes, and auxiliary microtubule-associated components; together they connect the outer kinetochore with the inner kinetochore, bind microtubules, and mediate interactions with mitotic checkpoint proteins that delay anaphase until chromosomes are bioriented on the spindle. Recruits the BUB1-BUB3 complex to kinetochores when phosphorylated by MPS1, to support spindle assembly checkpoint signaling; the effect is reversed by protein phosphatase 1 (PP1). The KNL1 complex is required for kinetochore binding by the kMAPs (kinetochore-bound microtubule-associated proteins) BIM1, BIK1 and SLK19, and motors CIN8 and KAR3. The polypeptide is Outer kinetochore KNL1 complex subunit SPC105 (SPC105) (Saccharomyces cerevisiae (strain ATCC 204508 / S288c) (Baker's yeast)).